A 578-amino-acid polypeptide reads, in one-letter code: PX domain-containing protein kinase-like protein (578 aa).

Residues 14–126 (LDDTVPLTAA…KFLDPNNYSA (113 aa)) form the PX domain. The region spanning 88 to 481 (FIAERQKGLQ…LENSEEHSAK (394 aa)) is the Protein kinase domain. Composition is skewed to basic residues over residues 437–448 (IHQHRRLTRAQS) and 457–469 (KKRK…KSKR). 2 disordered regions span residues 437–548 (IHQH…NGMS) and 559–578 (FQKG…PKIG). A compositionally biased stretch (low complexity) spans 483-513 (SNSNNSAGSGASSPLTSPSSPTPPSTSGISA). The segment covering 514 to 530 (LPPPPPPPPPPAAPLPP) has biased composition (pro residues). The region spanning 548-567 (SRGALLSSIQNFQKGTLRKA) is the WH2 domain. Positions 568 to 578 (KTCDHSAPKIG) are enriched in basic and acidic residues.

Belongs to the protein kinase superfamily. As to expression, widely expressed in all tissues examined except in heart. Isoform 1 is expressed in high levels in the brain, skeletal muscle, spleen and testis. Isoform 7 expression has yet to be demonstrated.

The protein localises to the cytoplasm. Its subcellular location is the cell membrane. Functionally, binds to and modulates brain Na,K-ATPase subunits ATP1B1 and ATP1B3 and may thereby participate in the regulation of electrical excitability and synaptic transmission. May not display kinase activity. This Homo sapiens (Human) protein is PX domain-containing protein kinase-like protein.